The chain runs to 246 residues: tRNA (guanine-N(7)-)-methyltransferase (246 aa).

S-adenosyl-L-methionine is bound by residues Glu77, Glu102, Asp129, and Asp152. Asp152 is an active-site residue. Substrate contacts are provided by residues Lys156, Asp188, and 225-228 (TKFE).

This sequence belongs to the class I-like SAM-binding methyltransferase superfamily. TrmB family.

The enzyme catalyses guanosine(46) in tRNA + S-adenosyl-L-methionine = N(7)-methylguanosine(46) in tRNA + S-adenosyl-L-homocysteine. It functions in the pathway tRNA modification; N(7)-methylguanine-tRNA biosynthesis. Functionally, catalyzes the formation of N(7)-methylguanine at position 46 (m7G46) in tRNA. In Haemophilus influenzae (strain PittEE), this protein is tRNA (guanine-N(7)-)-methyltransferase.